Here is a 142-residue protein sequence, read N- to C-terminus: uncharacterized protein (142 aa).

Belongs to the IIV-3 015R family.

This is an uncharacterized protein from Aedes vexans (Inland floodwater mosquito).